The sequence spans 301 residues: Phosducin-like protein (301 aa).

Thr-2 carries the N-acetylthreonine modification. The tract at residues 15–53 (YYYSSSEEEDSDHEDKDRGRGALAGSSMPADADLAGEGI) is disordered. Phosphoserine is present on residues Ser-20, Ser-25, Ser-226, Ser-293, and Ser-296. A Phosducin domain is found at 37-299 (LAGSSMPADA…TCHSEDSDLE (263 aa)). Residues 158 to 301 (FKQVFEIPSG…HSEDSDLEID (144 aa)) form a thioredoxin fold region.

It belongs to the phosducin family. As to quaternary structure, forms a complex with the beta and gamma subunits of the GTP-binding protein, transducin. Interacts with the CCT chaperonin complex.

Its subcellular location is the cell projection. It localises to the cilium. Functions as a co-chaperone for CCT in the assembly of heterotrimeric G protein complexes, facilitates the assembly of both Gbeta-Ggamma and RGS-Gbeta5 heterodimers. Also acts as a positive regulator of hedgehog signaling and regulates ciliary function. This Bos taurus (Bovine) protein is Phosducin-like protein (PDCL).